The following is an 83-amino-acid chain: Small ribosomal subunit protein eS21 (83 aa).

It belongs to the eukaryotic ribosomal protein eS21 family. As to quaternary structure, component of the 40S small ribosomal subunit. Interacts with sta.

The protein resides in the cytoplasm. It is found in the cytosol. It localises to the rough endoplasmic reticulum. Its function is as follows. May be an associated component of the ribosome rather than a core structural subunit. May act as a translation initiation factor. Has a role in regulation of cell proliferation in the hematopoietic organs and the imaginal disks of larva. In Drosophila grimshawi (Hawaiian fruit fly), this protein is Small ribosomal subunit protein eS21 (RpS21).